A 708-amino-acid chain; its full sequence is uncharacterized protein (708 aa).

Disordered stretches follow at residues Met-1 to Ser-79, Ala-119 to Arg-301, Tyr-349 to Asn-390, and Ser-410 to Arg-461. The segment covering Leu-65–Val-74 has biased composition (pro residues). Polar residues predominate over residues Asp-238–Ala-249. The segment covering Ser-260 to Gly-274 has biased composition (low complexity). Polar residues predominate over residues Ser-410–Arg-419. Residues Val-442 to Arg-461 show a composition bias toward basic and acidic residues.

This is an uncharacterized protein from Arabidopsis thaliana (Mouse-ear cress).